The primary structure comprises 779 residues: Probable glutamine--tRNA ligase (779 aa).

ATP contacts are provided by residues 268-270 and 274-280; these read EPN and HIGHAKA. L-glutamine is bound by residues D300 and Y440. ATP is bound by residues T459, 488-489, and 496-498; these read RL and LSK.

Belongs to the class-I aminoacyl-tRNA synthetase family.

The enzyme catalyses tRNA(Gln) + L-glutamine + ATP = L-glutaminyl-tRNA(Gln) + AMP + diphosphate. The chain is Probable glutamine--tRNA ligase (glnS) from Dictyostelium discoideum (Social amoeba).